Here is a 314-residue protein sequence, read N- to C-terminus: MELILSTSPAKLTLDPARQPELTLRFNLSKLTLDPARQPELSLSPRLAELTLDPTCHPEMSLSPGPAELTLDPQHQAKELPVPKLPELILEPVHCRPELMSACADLINDQWPRSRASRLHSLGQSSDAFPLCLMLLSPQPTPGAAPVVVGHARLSRVLDQPHSLLVETVVVARPLRGRGFGRRLMEGLEAFARARGFRRLHLTTHDQLYFYAHLGYQLGEPVQGLAFTNRRLSTTVLRAFSKPPCPQPPCKEPILAAQAVPRSSKGPPLPPPPPLPQSLTASPPPSPEPLPQSPLETCYRDLKGCPIFWMEKDI.

The N-acetyltransferase domain occupies L90 to P243. Residues R113 and R118–S121 each bind substrate. Residues V169–V171, G177–R182, and Q207 each bind acetyl-CoA. The segment at V260–L295 is disordered. Residues P267–Q292 show a composition bias toward pro residues.

Belongs to the acetyltransferase family.

Its subcellular location is the cytoplasm. The protein localises to the cytosol. The catalysed reaction is N-terminal L-aspartyl-L-aspartyl-L-aspartyl-[protein] + acetyl-CoA = N-terminal N-acetyl-L-aspartyl-L-aspartyl-L-aspartyl-[protein] + CoA + H(+). The enzyme catalyses N-terminal L-glutamyl-L-glutamyl-L-glutamyl-[protein] + acetyl-CoA = N-terminal N-acetyl-L-glutamyl-L-glutamyl-L-glutamyl-[protein] + CoA + H(+). Its function is as follows. N-alpha-acetyltransferase that specifically mediates the acetylation of the acidic amino terminus of processed forms of beta- and gamma-actin (ACTB and ACTG, respectively). N-terminal acetylation of processed beta- and gamma-actin regulates actin filament depolymerization and elongation. In vivo, preferentially displays N-terminal acetyltransferase activity towards acid N-terminal sequences starting with Asp-Asp-Asp and Glu-Glu-Glu. In vitro, shows high activity towards Met-Asp-Glu-Leu and Met-Asp-Asp-Asp. May act as a tumor suppressor. This chain is N-alpha-acetyltransferase 80, found in Mus musculus (Mouse).